The primary structure comprises 546 residues: Protein HydE (546 aa).

This chain is Protein HydE (hydE), found in Wolinella succinogenes (strain ATCC 29543 / DSM 1740 / CCUG 13145 / JCM 31913 / LMG 7466 / NCTC 11488 / FDC 602W) (Vibrio succinogenes).